The following is a 235-amino-acid chain: Uridylate kinase (235 aa).

8-11 provides a ligand contact to ATP; the sequence is KFSG. Residues 16 to 21 are involved in allosteric activation by GTP; that stretch reads GAEGYG. Gly50 is a UMP binding site. Residues Gly51 and Arg55 each coordinate ATP. Residues Asp71 and 132 to 139 each bind UMP; that span reads TGNPYFTT. Residues Thr159, Tyr165, and Asp168 each contribute to the ATP site.

Belongs to the UMP kinase family. Homohexamer.

Its subcellular location is the cytoplasm. The catalysed reaction is UMP + ATP = UDP + ADP. Its pathway is pyrimidine metabolism; CTP biosynthesis via de novo pathway; UDP from UMP (UMPK route): step 1/1. Its activity is regulated as follows. Allosterically activated by GTP. Inhibited by UTP. Its function is as follows. Catalyzes the reversible phosphorylation of UMP to UDP. The polypeptide is Uridylate kinase (Aliarcobacter butzleri (strain RM4018) (Arcobacter butzleri)).